Here is a 113-residue protein sequence, read N- to C-terminus: Ig kappa chain V-II region 26-10 (113 aa).

Residues 1–23 are framework-1; it reads DVVMTQTPLSLPVSLGDQASISC. Residues C23 and C93 are joined by a disulfide bond. Residues 24 to 39 are complementarity-determining-1; the sequence is RSSQSLVHSNGNTYLN. Residues 40–54 are framework-2; the sequence is WYLQKAGQSPKLLIY. A complementarity-determining-2 region spans residues 55–61; sequence KVSNRFS. Residues 62–93 form a framework-3 region; it reads GVPDRFSGSGSGTDFTLKISRVEAEDLGIYFC. The interval 94-102 is complementarity-determining-3; that stretch reads SQTTHVPPT. Positions 103-112 are framework-4; it reads FGGGTKLEIK.

The protein is Ig kappa chain V-II region 26-10 of Mus musculus (Mouse).